A 1080-amino-acid chain; its full sequence is Ubiquitin carboxyl-terminal hydrolase 8 (1080 aa).

Residues 33–116 enclose the MIT domain; sequence TKNYIHSAQK…ESLKLRYEEA (84 aa). The span at 119–173 shows a compositional bias: basic and acidic residues; it reads RKQLEEKDRREEEQLQQQKRQEMGREDSGAAAKRSVENLLDSKTKTQRINGEKSE. The interval 119–176 is disordered; the sequence is RKQLEEKDRREEEQLQQQKRQEMGREDSGAAAKRSVENLLDSKTKTQRINGEKSEGAA. Residue serine 160 is modified to Phosphoserine. Positions 195-313 constitute a Rhodanese domain; it reads KNTSLIIMDA…WLLCYPQFTT (119 aa). The span at 379 to 393 shows a compositional bias: low complexity; the sequence is ALAGPGAAPRAEASP. Disordered stretches follow at residues 379-455, 468-605, and 642-710; these read ALAG…TDEE, EKNK…RSEE, and PPEM…KPPC. A Phosphoserine modification is found at serine 392. An SH3-binding motif is present at residues 405 to 413; the sequence is PQVDRTKKP. Residues 417–427 show a composition bias toward basic and acidic residues; the sequence is LPEDHRIKSEN. Serine 446 carries the post-translational modification Phosphoserine. Basic and acidic residues-rich tracts occupy residues 468–535, 549–577, and 593–605; these read EKNK…RELS, SKSE…KRPA, and AQRE…RSEE. A Phosphothreonine modification is found at threonine 569. Over residues 678 to 688 the composition is skewed to polar residues; that stretch reads SYSSPDITQAL. Phosphoserine occurs at positions 680 and 681. The USP domain maps to 739-1071; the sequence is TGLRNLGNTC…AAYILFYTSL (333 aa). Cysteine 748 functions as the Nucleophile in the catalytic mechanism. Position 907 is a phosphothreonine (threonine 907). The active-site Proton acceptor is the histidine 1029.

This sequence belongs to the peptidase C19 family. As to quaternary structure, forms a ternary complex with RNF128 and OTUB1. Interacts (via C-terminal UCH catalytic domain) with OTUB1 isoform 1. Interacts with STAM2 (via SH3 domain). Interacts with DNAJB3, EGFR, EPS15, RASGRF1, RNF41, YWHAE, YWHAG and YWHAZ. Interacts with NBR1, RASGRF1, RNF41 and IST1. Associates with the ESCRT-0 complex and with microtubules. Interacts with BIRC6/bruce and KIF23/MKLP1. In terms of processing, phosphorylation of Ser-680 is essential for interaction with YWHAE and for cytosol localization. Undergoes dephosphorylation at Ser-680 in the M phase. Tyrosine-phosphorylated in its N-terminal half in an EGFR-dependent manner. Post-translationally, ubiquitinated. Inactive form is mostly monoubiquitinated, but polyubiquitination happens too. Ubiquitination is increased in EGF-stimulated cells. Ubiquitination of active form is undetectable, suggesting a possibility that USP8 deubiquitinates itself, thereby regulating its own function. In terms of tissue distribution, highly expressed in testis. Expressed at intermediate level in brain.

It localises to the cytoplasm. It is found in the nucleus. The protein localises to the endosome membrane. Its subcellular location is the cell membrane. It carries out the reaction Thiol-dependent hydrolysis of ester, thioester, amide, peptide and isopeptide bonds formed by the C-terminal Gly of ubiquitin (a 76-residue protein attached to proteins as an intracellular targeting signal).. Its function is as follows. Hydrolase that can remove conjugated ubiquitin from proteins and therefore plays an important regulatory role at the level of protein turnover by preventing degradation. Converts both 'Lys-48' an 'Lys-63'-linked ubiquitin chains. Catalytic activity is enhanced in the M phase. Involved in cell proliferation. Required to enter into S phase in response to serum stimulation. May regulate T-cell anergy mediated by RNF128 via the formation of a complex containing RNF128 and OTUB1. Probably regulates the stability of STAM2 and RASGRF1. Regulates endosomal ubiquitin dynamics, cargo sorting, membrane traffic at early endosomes, and maintenance of ESCRT-0 stability. The level of protein ubiquitination on endosomes is essential for maintaining the morphology of the organelle. Deubiquitinates EPS15 and controls tyrosine kinase stability. Removes conjugated ubiquitin from EGFR thus regulating EGFR degradation and downstream MAPK signaling. Involved in acrosome biogenesis through interaction with the spermatid ESCRT-0 complex and microtubules. Deubiquitinates BIRC6/bruce and KIF23/MKLP1. Deubiquitinates BACE1 which inhibits BACE1 lysosomal degradation and modulates BACE-mediated APP cleavage and amyloid-beta formation. In Mus musculus (Mouse), this protein is Ubiquitin carboxyl-terminal hydrolase 8.